The chain runs to 238 residues: MTSPRVVAVIPAAGVGSRMQADRPKQYLSLNGKTILEHTIDALLNHPLIDDVIVAISQGDEYFDQLGLRQKPIRVVDGGKERADSVLNGILSLDENDWALVHDAARPCVDDADISNLLSLIGSEDVTGGILATPVRDTMKRVKPSSNIISHTEDRNGLWHALTPQLFPAMLLKRALQEGLAQGVSITDEASAMEFAGHSVAMVSGSPANIKITHPADLPLAEFYLKQKFSAQGDSAKN.

This sequence belongs to the IspD/TarI cytidylyltransferase family. IspD subfamily.

The catalysed reaction is 2-C-methyl-D-erythritol 4-phosphate + CTP + H(+) = 4-CDP-2-C-methyl-D-erythritol + diphosphate. Its pathway is isoprenoid biosynthesis; isopentenyl diphosphate biosynthesis via DXP pathway; isopentenyl diphosphate from 1-deoxy-D-xylulose 5-phosphate: step 2/6. In terms of biological role, catalyzes the formation of 4-diphosphocytidyl-2-C-methyl-D-erythritol from CTP and 2-C-methyl-D-erythritol 4-phosphate (MEP). The chain is 2-C-methyl-D-erythritol 4-phosphate cytidylyltransferase from Alteromonas mediterranea (strain DSM 17117 / CIP 110805 / LMG 28347 / Deep ecotype).